The chain runs to 184 residues: Ribose 1,5-bisphosphate phosphokinase PhnN (184 aa).

Glycine 11–aspartate 18 contacts ATP.

The protein belongs to the ribose 1,5-bisphosphokinase family.

It carries out the reaction alpha-D-ribose 1,5-bisphosphate + ATP = 5-phospho-alpha-D-ribose 1-diphosphate + ADP. It participates in metabolic intermediate biosynthesis; 5-phospho-alpha-D-ribose 1-diphosphate biosynthesis; 5-phospho-alpha-D-ribose 1-diphosphate from D-ribose 5-phosphate (route II): step 3/3. Its function is as follows. Catalyzes the phosphorylation of ribose 1,5-bisphosphate to 5-phospho-D-ribosyl alpha-1-diphosphate (PRPP). The sequence is that of Ribose 1,5-bisphosphate phosphokinase PhnN from Burkholderia mallei (strain SAVP1).